A 277-amino-acid chain; its full sequence is Phosphonates import ATP-binding protein PhnC (277 aa).

The ABC transporter domain occupies 3 to 251 (IKLDKVSARH…RLQALYAQHL (249 aa)). 40 to 47 (GPSGAGKT) provides a ligand contact to ATP.

The protein belongs to the ABC transporter superfamily. Phosphonates importer (TC 3.A.1.9.1) family. The complex is composed of two ATP-binding proteins (PhnC), two transmembrane proteins (PhnE) and a solute-binding protein (PhnD).

It localises to the cell inner membrane. It carries out the reaction phosphonate(out) + ATP + H2O = phosphonate(in) + ADP + phosphate + H(+). Functionally, part of the ABC transporter complex PhnCDE involved in phosphonates import. Responsible for energy coupling to the transport system. This is Phosphonates import ATP-binding protein PhnC from Polaromonas sp. (strain JS666 / ATCC BAA-500).